A 264-amino-acid polypeptide reads, in one-letter code: Thymidylate synthase (264 aa).

R21 lines the dUMP pocket. H51 provides a ligand contact to (6R)-5,10-methylene-5,6,7,8-tetrahydrofolate. 126–127 (RR) is a dUMP binding site. The active-site Nucleophile is C146. DUMP is bound by residues 166–169 (RSVD), N177, and 207–209 (HLY). D169 lines the (6R)-5,10-methylene-5,6,7,8-tetrahydrofolate pocket. S263 contributes to the (6R)-5,10-methylene-5,6,7,8-tetrahydrofolate binding site.

It belongs to the thymidylate synthase family. Bacterial-type ThyA subfamily. Homodimer.

It localises to the cytoplasm. The catalysed reaction is dUMP + (6R)-5,10-methylene-5,6,7,8-tetrahydrofolate = 7,8-dihydrofolate + dTMP. It functions in the pathway pyrimidine metabolism; dTTP biosynthesis. Catalyzes the reductive methylation of 2'-deoxyuridine-5'-monophosphate (dUMP) to 2'-deoxythymidine-5'-monophosphate (dTMP) while utilizing 5,10-methylenetetrahydrofolate (mTHF) as the methyl donor and reductant in the reaction, yielding dihydrofolate (DHF) as a by-product. This enzymatic reaction provides an intracellular de novo source of dTMP, an essential precursor for DNA biosynthesis. The chain is Thymidylate synthase from Anoxybacillus flavithermus (strain DSM 21510 / WK1).